We begin with the raw amino-acid sequence, 748 residues long: Catalase-peroxidase 2 (748 aa).

Polar residues predominate over residues 1-24 (MSSDTSDSRPPNPDTKTASTSESE). The segment at 1 to 43 (MSSDTSDSRPPNPDTKTASTSESENPAIPSPKPKSGAPLRNQD) is disordered. Positions 113–238 (WHSAGTYRIH…YGATTMGLIY (126 aa)) form a cross-link, tryptophyl-tyrosyl-methioninium (Trp-Tyr) (with M-264). The active-site Proton acceptor is the histidine 114. The segment at residues 238-264 (YVNPEGPEGQPDPLAAAHDIRETFGRM) is a cross-link (tryptophyl-tyrosyl-methioninium (Tyr-Met) (with W-113)). Histidine 279 provides a ligand contact to heme b.

This sequence belongs to the peroxidase family. Peroxidase/catalase subfamily. Homotetramer. Heme b is required as a cofactor. Post-translationally, formation of the three residue Trp-Tyr-Met cross-link is important for the catalase, but not the peroxidase activity of the enzyme.

It catalyses the reaction H2O2 + AH2 = A + 2 H2O. The catalysed reaction is 2 H2O2 = O2 + 2 H2O. In terms of biological role, bifunctional enzyme with both catalase and broad-spectrum peroxidase activity. May play a role in the intracellular survival of mycobacteria. The sequence is that of Catalase-peroxidase 2 from Mycolicibacterium smegmatis (strain ATCC 700084 / mc(2)155) (Mycobacterium smegmatis).